A 44-amino-acid chain; its full sequence is uncharacterized protein (44 aa).

This is an uncharacterized protein from Saccharomyces cerevisiae (strain ATCC 204508 / S288c) (Baker's yeast).